The following is a 598-amino-acid chain: Aspartate--tRNA ligase (598 aa).

An L-aspartate-binding site is contributed by E175. The interval 199 to 202 (QLFK) is aspartate. R221 contacts L-aspartate. Residues 221–223 (RDE) and Q230 contribute to the ATP site. L-aspartate is bound at residue H450. E486 is an ATP binding site. Position 493 (R493) interacts with L-aspartate. 538–541 (GLDR) serves as a coordination point for ATP.

The protein belongs to the class-II aminoacyl-tRNA synthetase family. Type 1 subfamily. As to quaternary structure, homodimer.

Its subcellular location is the cytoplasm. The catalysed reaction is tRNA(Asp) + L-aspartate + ATP = L-aspartyl-tRNA(Asp) + AMP + diphosphate. Functionally, catalyzes the attachment of L-aspartate to tRNA(Asp) in a two-step reaction: L-aspartate is first activated by ATP to form Asp-AMP and then transferred to the acceptor end of tRNA(Asp). The sequence is that of Aspartate--tRNA ligase from Lactiplantibacillus plantarum (strain ATCC BAA-793 / NCIMB 8826 / WCFS1) (Lactobacillus plantarum).